A 260-amino-acid polypeptide reads, in one-letter code: Acyl-coenzyme A diphosphatase FITM2 (260 aa).

At M1–H23 the chain is on the cytoplasmic side. A helical transmembrane segment spans residues C24 to L44. Residues P45–N57 are Lumenal-facing. A helical transmembrane segment spans residues V58 to L78. At T79 to R93 the chain is on the cytoplasmic side. Residues L94–I114 traverse the membrane as a helical segment. Topologically, residues E115–Y145 are lumenal. Residues W146–L166 form a helical membrane-spanning segment. The active site involves H154. The Cytoplasmic portion of the chain corresponds to E167–Q189. A run of 2 helical transmembrane segments spans residues F190–Y210 and F211–T231. H212 is an active-site residue. Over Y232 to N260 the chain is Cytoplasmic.

This sequence belongs to the FIT family. FIT2 subfamily.

The protein resides in the endoplasmic reticulum membrane. It carries out the reaction an acyl-CoA + H2O = an acyl-4'-phosphopantetheine + adenosine 3',5'-bisphosphate + 2 H(+). In terms of biological role, fatty acyl-coenzyme A (CoA) diphosphatase that hydrolyzes fatty acyl-CoA to yield acyl-4'-phosphopantetheine and adenosine 3',5'-bisphosphate. Preferentially hydrolyzes unsaturated long-chain acyl-CoA substrates in the endoplasmic reticulum (ER) lumen. This catalytic activity is required for maintaining ER structure and for lipid droplets (LDs) biogenesis, which are lipid storage organelles involved in maintaining lipid and energy homeostasis. May directly bind to diacylglycerol (DAGs) and triacylglycerol, which is also important for LD biogenesis. May support directional budding of nacent LDs from the ER into the cytosol by reducing DAG levels at sites of LD formation. May play a role in the regulation of cell morphology, ER morphology and cytoskeletal organization. The polypeptide is Acyl-coenzyme A diphosphatase FITM2 (Xenopus tropicalis (Western clawed frog)).